The primary structure comprises 87 residues: Co-chaperonin GroES (87 aa).

It belongs to the GroES chaperonin family. As to quaternary structure, heptamer of 7 subunits arranged in a ring. Interacts with the chaperonin GroEL.

It localises to the cytoplasm. Its function is as follows. Together with the chaperonin GroEL, plays an essential role in assisting protein folding. The GroEL-GroES system forms a nano-cage that allows encapsulation of the non-native substrate proteins and provides a physical environment optimized to promote and accelerate protein folding. GroES binds to the apical surface of the GroEL ring, thereby capping the opening of the GroEL channel. This chain is Co-chaperonin GroES, found in Campylobacter hominis (strain ATCC BAA-381 / DSM 21671 / CCUG 45161 / LMG 19568 / NCTC 13146 / CH001A).